We begin with the raw amino-acid sequence, 426 residues long: Adenylosuccinate synthetase (426 aa).

Residues 12 to 18 (GDEGKGK) and 40 to 42 (GHT) contribute to the GTP site. Aspartate 13 acts as the Proton acceptor in catalysis. Aspartate 13 and glycine 40 together coordinate Mg(2+). Residues 13-16 (DEGK), 38-41 (NAGH), threonine 130, arginine 144, glutamine 224, threonine 239, and arginine 303 each bind IMP. Histidine 41 serves as the catalytic Proton donor. 299 to 305 (TVTNRVR) contacts substrate. GTP is bound by residues arginine 305, 331–333 (KLD), and 413–415 (STG).

It belongs to the adenylosuccinate synthetase family. In terms of assembly, homodimer. Requires Mg(2+) as cofactor.

The protein resides in the cytoplasm. It catalyses the reaction IMP + L-aspartate + GTP = N(6)-(1,2-dicarboxyethyl)-AMP + GDP + phosphate + 2 H(+). Its pathway is purine metabolism; AMP biosynthesis via de novo pathway; AMP from IMP: step 1/2. In terms of biological role, plays an important role in the de novo pathway of purine nucleotide biosynthesis. Catalyzes the first committed step in the biosynthesis of AMP from IMP. This Anaplasma marginale (strain St. Maries) protein is Adenylosuccinate synthetase.